Reading from the N-terminus, the 132-residue chain is Small ribosomal subunit protein uS8 (132 aa).

It belongs to the universal ribosomal protein uS8 family. In terms of assembly, part of the 30S ribosomal subunit. Contacts proteins S5 and S12.

One of the primary rRNA binding proteins, it binds directly to 16S rRNA central domain where it helps coordinate assembly of the platform of the 30S subunit. This is Small ribosomal subunit protein uS8 from Psychrobacter cryohalolentis (strain ATCC BAA-1226 / DSM 17306 / VKM B-2378 / K5).